The following is a 135-amino-acid chain: MLSPKRTRFRKQHRGRMKGISYRGNRICFGRYALQALEPAWITSRQIEAGRRAMARYARRGGKIWVRIFPDKPVTVRPAETRMGSGKGSPEYWVSVVKPGRILYEIGGISETVARAAISIAASKMPIRTQFVIAG.

Belongs to the universal ribosomal protein uL16 family. As to quaternary structure, part of the 50S ribosomal subunit.

Its subcellular location is the plastid. The protein resides in the chloroplast. This is Large ribosomal subunit protein uL16c from Piper cenocladum (Ant piper).